The sequence spans 303 residues: UPF0282 protein PAE3680 (303 aa).

Belongs to the UPF0282 family.

This Pyrobaculum aerophilum (strain ATCC 51768 / DSM 7523 / JCM 9630 / CIP 104966 / NBRC 100827 / IM2) protein is UPF0282 protein PAE3680.